The primary structure comprises 170 residues: Thioredoxin-like protein YneN (170 aa).

The helical transmembrane segment at Trp5–Tyr23 threads the bilayer. One can recognise a Thioredoxin domain in the interval Ile33–Asp170. A disulfide bond links Cys71 and Cys74.

This sequence belongs to the thioredoxin family.

It is found in the cell membrane. The chain is Thioredoxin-like protein YneN (yneN) from Bacillus subtilis (strain 168).